Consider the following 22-residue polypeptide: Caerin-3.5 (22 aa).

Residue lysine 22 is modified to Lysine amide.

In terms of tissue distribution, expressed by the skin dorsal glands.

It is found in the secreted. In terms of biological role, shows significant activity against Gram-positive organisms, but is less effective against Gram-negative organisms. The chain is Caerin-3.5 from Ranoidea gracilenta (Dainty green tree frog).